We begin with the raw amino-acid sequence, 249 residues long: MPIGMPKIPFLLDGDEEDEEEDDATWVDLYNVLYRTRSIFLGDAIHFEVANHIAGLMIFLTIQDATQNLYFFINSPGGLAVAGLLIYDTMQYVTPPVYTLGLGVLASMASFLLVGGETSKRLMGPNGRVMIHQPESDYTHKDQSLEVQLDSGEVEDIRKMVIRVYLERTRLPREVLNDHLERNYFMTATEAKYYGIVDDIGIQNLLARLRAESASQDNSLDPDAPDESASQDNSLDPDAPDETRPPKLR.

Ser107 (nucleophile) is an active-site residue. The active site involves His132. Residues Glu212–Arg249 form a disordered region.

This sequence belongs to the peptidase S14 family. Component of the chloroplastic Clp protease core complex.

The protein localises to the plastid. It is found in the chloroplast stroma. It carries out the reaction Hydrolysis of proteins to small peptides in the presence of ATP and magnesium. alpha-casein is the usual test substrate. In the absence of ATP, only oligopeptides shorter than five residues are hydrolyzed (such as succinyl-Leu-Tyr-|-NHMec, and Leu-Tyr-Leu-|-Tyr-Trp, in which cleavage of the -Tyr-|-Leu- and -Tyr-|-Trp bonds also occurs).. Its function is as follows. Cleaves peptides in various proteins in a process that requires ATP hydrolysis. Has a chymotrypsin-like activity. Plays a major role in the degradation of misfolded proteins. The sequence is that of ATP-dependent Clp protease proteolytic subunit from Oenothera elata subsp. hookeri (Hooker's evening primrose).